The chain runs to 338 residues: Biotin synthase (338 aa).

One can recognise a Radical SAM core domain in the interval 46-270 (NEVQLSTLLS…VAVARITMPA (225 aa)). [4Fe-4S] cluster contacts are provided by C61, C65, and C68. 4 residues coordinate [2Fe-2S] cluster: C105, C136, C196, and R274.

This sequence belongs to the radical SAM superfamily. Biotin synthase family. Homodimer. [4Fe-4S] cluster is required as a cofactor. Requires [2Fe-2S] cluster as cofactor.

It catalyses the reaction (4R,5S)-dethiobiotin + (sulfur carrier)-SH + 2 reduced [2Fe-2S]-[ferredoxin] + 2 S-adenosyl-L-methionine = (sulfur carrier)-H + biotin + 2 5'-deoxyadenosine + 2 L-methionine + 2 oxidized [2Fe-2S]-[ferredoxin]. It participates in cofactor biosynthesis; biotin biosynthesis; biotin from 7,8-diaminononanoate: step 2/2. Its function is as follows. Catalyzes the conversion of dethiobiotin (DTB) to biotin by the insertion of a sulfur atom into dethiobiotin via a radical-based mechanism. In Rhizorhabdus wittichii (strain DSM 6014 / CCUG 31198 / JCM 15750 / NBRC 105917 / EY 4224 / RW1) (Sphingomonas wittichii), this protein is Biotin synthase.